A 365-amino-acid polypeptide reads, in one-letter code: Tetraacyldisaccharide 4'-kinase (365 aa).

An ATP-binding site is contributed by 68-75; that stretch reads VVGGAGKT.

The protein belongs to the LpxK family.

It catalyses the reaction a lipid A disaccharide + ATP = a lipid IVA + ADP + H(+). The protein operates within glycolipid biosynthesis; lipid IV(A) biosynthesis; lipid IV(A) from (3R)-3-hydroxytetradecanoyl-[acyl-carrier-protein] and UDP-N-acetyl-alpha-D-glucosamine: step 6/6. Functionally, transfers the gamma-phosphate of ATP to the 4'-position of a tetraacyldisaccharide 1-phosphate intermediate (termed DS-1-P) to form tetraacyldisaccharide 1,4'-bis-phosphate (lipid IVA). The protein is Tetraacyldisaccharide 4'-kinase of Chlamydia pneumoniae (Chlamydophila pneumoniae).